A 339-amino-acid polypeptide reads, in one-letter code: Heat stress transcription factor C-1a (339 aa).

A coiled-coil region spans residues E154–A217. The segment at L176 to A212 is hydrophobic repeat HR-A/B. The disordered stretch occupies residues A227–P248. The short motif at R229–R233 is the Nuclear localization signal element.

It belongs to the HSF family. Class C subfamily. In terms of assembly, homotrimer. Exhibits temperature-dependent phosphorylation.

It is found in the nucleus. In terms of biological role, transcriptional regulator that specifically binds DNA of heat shock promoter elements (HSE). The sequence is that of Heat stress transcription factor C-1a (HSFC1A) from Oryza sativa subsp. japonica (Rice).